We begin with the raw amino-acid sequence, 385 residues long: Trichodiene synthase (385 aa).

This sequence belongs to the trichodiene synthase family.

The catalysed reaction is (2E,6E)-farnesyl diphosphate = trichodiene + diphosphate. It participates in sesquiterpene biosynthesis; trichothecene biosynthesis. TS is a member of the terpene cyclase group of enzymes. It catalyzes the isomerization and cyclization of farnesyl pyro-phosphate to form trichodiene, the first cyclic intermediate in the biosynthetic pathway for trichothecenes. It serves to branch trichothecene biosynthesis from the isoprenoid pathway. The chain is Trichodiene synthase (TRI5) from Paramyrothecium roridum (Myrothecium leaf spot fungus).